The sequence spans 340 residues: MNGTRIEFEGITKVFDSGKKNITALDGVTLTVEPGEILGVIGYSGAGKSTLVRMINGLDTPTSGKLLLDGTDIVGMSEKKLRDIRAHIGMIFQQFNLFTSRTAAGNIEYPLKLAGVDKAERKRRVDELLAFVGLSDRGGNYPEELSGGQKQRVGIARALANNPALLLADEATSALDPETTHEVLELLRKVNRELGITIVVITHEMDVIRSIADKVAVMEAGKVVEYGSVYEVFSHPQTNVAKRFVSTSLRNTPDAIESEDLLAHEGRLFTITLSENSGFFTAAAKAKDAGASIGIVHGGITTLQKHSFGKVTVRLNGEKSVIDDFYAYLTTTTDIQEIQR.

Residues 6–245 (IEFEGITKVF…PQTNVAKRFV (240 aa)) form the ABC transporter domain. An ATP-binding site is contributed by 42–49 (GYSGAGKS).

This sequence belongs to the ABC transporter superfamily. Methionine importer (TC 3.A.1.24) family. As to quaternary structure, the complex is composed of two ATP-binding proteins (MetN), two transmembrane proteins (MetI) and a solute-binding protein (MetQ).

It localises to the cell membrane. It carries out the reaction L-methionine(out) + ATP + H2O = L-methionine(in) + ADP + phosphate + H(+). The enzyme catalyses D-methionine(out) + ATP + H2O = D-methionine(in) + ADP + phosphate + H(+). Part of the ABC transporter complex MetNIQ involved in methionine import. Responsible for energy coupling to the transport system. The polypeptide is Methionine import ATP-binding protein MetN (Corynebacterium diphtheriae (strain ATCC 700971 / NCTC 13129 / Biotype gravis)).